A 261-amino-acid chain; its full sequence is 5'-nucleotidase SurE (261 aa).

Aspartate 8, aspartate 9, serine 43, and asparagine 96 together coordinate a divalent metal cation.

The protein belongs to the SurE nucleotidase family. A divalent metal cation is required as a cofactor.

The protein resides in the cytoplasm. The enzyme catalyses a ribonucleoside 5'-phosphate + H2O = a ribonucleoside + phosphate. Functionally, nucleotidase that shows phosphatase activity on nucleoside 5'-monophosphates. This is 5'-nucleotidase SurE from Cereibacter sphaeroides (strain KD131 / KCTC 12085) (Rhodobacter sphaeroides).